The following is a 145-amino-acid chain: Peptide methionine sulfoxide reductase MsrB (145 aa).

The MsrB domain maps to 4–127 (SDELKQRIGD…NSAALKFIPY (124 aa)). The active-site Nucleophile is the Cys116.

The protein belongs to the MsrB Met sulfoxide reductase family.

The catalysed reaction is L-methionyl-[protein] + [thioredoxin]-disulfide + H2O = L-methionyl-(R)-S-oxide-[protein] + [thioredoxin]-dithiol. In Streptococcus pyogenes serotype M1, this protein is Peptide methionine sulfoxide reductase MsrB.